Consider the following 263-residue polypeptide: Proliferating cell nuclear antigen (263 aa).

Residues 61 to 80 (RCDRTINLGLSLANMSKALK) mediate DNA binding.

Belongs to the PCNA family. Homotrimer. Forms a complex with activator 1 heteropentamer in the presence of ATP.

Its subcellular location is the nucleus. Functionally, this protein is an auxiliary protein of DNA polymerase delta and is involved in the control of eukaryotic DNA replication by increasing the polymerase's processibility during elongation of the leading strand. In Caenorhabditis elegans, this protein is Proliferating cell nuclear antigen (pcn-1).